We begin with the raw amino-acid sequence, 264 residues long: 3-methyl-2-oxobutanoate hydroxymethyltransferase 2 (264 aa).

Mg(2+)-binding residues include D44 and D83. Residues 44–45 (DS), D83, and K111 contribute to the 3-methyl-2-oxobutanoate site. E113 is a binding site for Mg(2+). E180 acts as the Proton acceptor in catalysis.

Belongs to the PanB family. As to quaternary structure, homodecamer; pentamer of dimers. It depends on Mg(2+) as a cofactor.

Its subcellular location is the cytoplasm. The catalysed reaction is 3-methyl-2-oxobutanoate + (6R)-5,10-methylene-5,6,7,8-tetrahydrofolate + H2O = 2-dehydropantoate + (6S)-5,6,7,8-tetrahydrofolate. It participates in cofactor biosynthesis; (R)-pantothenate biosynthesis; (R)-pantoate from 3-methyl-2-oxobutanoate: step 1/2. Its function is as follows. Catalyzes the reversible reaction in which hydroxymethyl group from 5,10-methylenetetrahydrofolate is transferred onto alpha-ketoisovalerate to form ketopantoate. In Hahella chejuensis (strain KCTC 2396), this protein is 3-methyl-2-oxobutanoate hydroxymethyltransferase 2.